A 270-amino-acid chain; its full sequence is Tetraspanin-17 (270 aa).

At 1–19 (MPGKHQQFQDPEVGCCGKY) the chain is on the cytoplasmic side. The helical transmembrane segment at 20-40 (FLFGFNIVFWVLGALFLAIGL) threads the bilayer. Residues 41 to 63 (WAWGEKGVLSNISALTDLGGLDP) lie on the Extracellular side of the membrane. A glycan (N-linked (GlcNAc...) asparagine) is linked at N51. A helical transmembrane segment spans residues 64-84 (VWLFVVVGGVMSVLGFAGCIG). The Cytoplasmic segment spans residues 85–94 (ALRENTFLLK). Residues 95 to 115 (FFSVFLGLIFFLELAAGILAF) form a helical membrane-spanning segment. At 116 to 234 (VFKDWIRDQL…GQFEKWLQDN (119 aa)) the chain is on the extracellular side. 4 disulfide bridges follow: C155-C223, C156-C188, C172-C182, and C189-C202. N-linked (GlcNAc...) asparagine glycosylation is present at N171. A helical transmembrane segment spans residues 235 to 255 (LIVVAGVLVGIALLQIFGLCL). Residues 256–270 (AQNLVSDIKAVKANW) lie on the Cytoplasmic side of the membrane.

Belongs to the tetraspanin (TM4SF) family. In terms of assembly, interacts with ADAM10; the interaction influences ADAM10 substrate specificity, endocytosis and turnover.

It is found in the cell membrane. Part of TspanC8 subgroup, composed of 6 members that interact with the transmembrane metalloprotease ADAM10. This interaction is required for ADAM10 exit from the endoplasmic reticulum and for enzymatic maturation and trafficking to the cell surface as well as substrate specificity. Different TspanC8/ADAM10 complexes have distinct substrates. Seems to regulate VE-cadherin expression in endothelial cells probably through interaction with ADAM10, promoting leukocyte transmigration. The protein is Tetraspanin-17 (Tspan17) of Mus musculus (Mouse).